A 430-amino-acid chain; its full sequence is MVGYIGNVDIGVFDAEVANSMSAELERQNTLLQMIASENFVSRAVLQAQGSVLTNKYAEGYAGSRYYCGCALVDVVENLAVERLCRLFGCKFANVQPHSGSQANQQVFMALLKPGDTILGMSLDCGGHLTHGAAPNVSGRWFNAVSYGVNRDTGLIDMDEVEALALSAKPSLIIAGASSYPRRIDFAAFRAIADKVGAYLLADIAHYSGLIAGGCYPSPFGHAHVVTSTTHKTLRGPRGAVIMTDDEEIHKKIRLSVFPGMQGGPLMHVIAAKAVAFKEALHPDFKLYAQQVLENSRVLAGVLSSEGLDVVTGGTDSHIVLLDLRSKGVTGREVSSSLERAGIVCNKNAVPFDTEKPWVTSGIRLGSAAETSRGLGVPEFESIGRLVAKVVNACSLGQEKMSAAEAEVRREVNGLVRSLPMSAFPVCEVC.

(6S)-5,6,7,8-tetrahydrofolate contacts are provided by residues L123 and 127 to 129; that span reads GHL. K232 is subject to N6-(pyridoxal phosphate)lysine. Residue E248 participates in (6S)-5,6,7,8-tetrahydrofolate binding.

The protein belongs to the SHMT family. As to quaternary structure, homodimer. Pyridoxal 5'-phosphate serves as cofactor.

It localises to the cytoplasm. It catalyses the reaction (6R)-5,10-methylene-5,6,7,8-tetrahydrofolate + glycine + H2O = (6S)-5,6,7,8-tetrahydrofolate + L-serine. It participates in one-carbon metabolism; tetrahydrofolate interconversion. The protein operates within amino-acid biosynthesis; glycine biosynthesis; glycine from L-serine: step 1/1. Catalyzes the reversible interconversion of serine and glycine with tetrahydrofolate (THF) serving as the one-carbon carrier. This reaction serves as the major source of one-carbon groups required for the biosynthesis of purines, thymidylate, methionine, and other important biomolecules. Also exhibits THF-independent aldolase activity toward beta-hydroxyamino acids, producing glycine and aldehydes, via a retro-aldol mechanism. This is Serine hydroxymethyltransferase from Anaplasma marginale (strain St. Maries).